Consider the following 648-residue polypeptide: Macrolide export ATP-binding/permease protein MacB (648 aa).

Positions 5–243 (LELKDIRRSY…AGGTEPVVNT (239 aa)) constitute an ABC transporter domain. 41-48 (GASGSGKS) is a binding site for ATP. 4 consecutive transmembrane segments (helical) span residues 273 to 293 (LLTMLGIIIGIASVVSIVVVG), 523 to 543 (LFLTLVAVISLVVGGIGVMNI), 576 to 596 (AVLVCLVGGALGITLSLLIAF), and 600 to 620 (LFLPGWEIGFSPLALLLAFLC).

It belongs to the ABC transporter superfamily. Macrolide exporter (TC 3.A.1.122) family. As to quaternary structure, homodimer. Part of the tripartite efflux system MacAB-TolC, which is composed of an inner membrane transporter, MacB, a periplasmic membrane fusion protein, MacA, and an outer membrane component, TolC. The complex forms a large protein conduit and can translocate molecules across both the inner and outer membranes. Interacts with MacA.

Its subcellular location is the cell inner membrane. In terms of biological role, part of the tripartite efflux system MacAB-TolC. MacB is a non-canonical ABC transporter that contains transmembrane domains (TMD), which form a pore in the inner membrane, and an ATP-binding domain (NBD), which is responsible for energy generation. Confers resistance against macrolides. This chain is Macrolide export ATP-binding/permease protein MacB, found in Shigella flexneri.